Reading from the N-terminus, the 208-residue chain is Uracil phosphoribosyltransferase (208 aa).

Residues Arg78, Arg103, and 130–138 (DPMLATGGS) each bind 5-phospho-alpha-D-ribose 1-diphosphate. Residues Ile193 and 198-200 (GDA) contribute to the uracil site. Asp199 is a 5-phospho-alpha-D-ribose 1-diphosphate binding site.

It belongs to the UPRTase family. It depends on Mg(2+) as a cofactor.

The catalysed reaction is UMP + diphosphate = 5-phospho-alpha-D-ribose 1-diphosphate + uracil. It participates in pyrimidine metabolism; UMP biosynthesis via salvage pathway; UMP from uracil: step 1/1. With respect to regulation, allosterically activated by GTP. Functionally, catalyzes the conversion of uracil and 5-phospho-alpha-D-ribose 1-diphosphate (PRPP) to UMP and diphosphate. The protein is Uracil phosphoribosyltransferase of Shewanella amazonensis (strain ATCC BAA-1098 / SB2B).